A 605-amino-acid chain; its full sequence is Elongation factor 4 (605 aa).

A tr-type G domain is found at cysteine 9–alanine 192. Residues aspartate 21–threonine 26 and asparagine 139–aspartate 142 each bind GTP.

Belongs to the TRAFAC class translation factor GTPase superfamily. Classic translation factor GTPase family. LepA subfamily.

The protein resides in the cell inner membrane. It carries out the reaction GTP + H2O = GDP + phosphate + H(+). Functionally, required for accurate and efficient protein synthesis under certain stress conditions. May act as a fidelity factor of the translation reaction, by catalyzing a one-codon backward translocation of tRNAs on improperly translocated ribosomes. Back-translocation proceeds from a post-translocation (POST) complex to a pre-translocation (PRE) complex, thus giving elongation factor G a second chance to translocate the tRNAs correctly. Binds to ribosomes in a GTP-dependent manner. This chain is Elongation factor 4, found in Chlorobium chlorochromatii (strain CaD3).